Here is a 320-residue protein sequence, read N- to C-terminus: Putative fatty acid elongase 3 (320 aa).

Asn-14 carries an N-linked (GlcNAc...) asparagine glycan. The next 6 helical transmembrane spans lie at 33 to 53 (WMQN…AVIF), 67 to 87 (LDTP…LGFL), 120 to 140 (FWTE…IFIV), 145 to 165 (PLIF…WHAY), 203 to 223 (MAMV…IIGV), and 242 to 262 (LGLC…FFYH).

It belongs to the ELO family.

The protein resides in the membrane. The enzyme catalyses a very-long-chain acyl-CoA + malonyl-CoA + H(+) = a very-long-chain 3-oxoacyl-CoA + CO2 + CoA. Its pathway is lipid metabolism; fatty acid biosynthesis. Functionally, could be implicated in synthesis of very long chain fatty acids. May be required for normally rapid growth. This is Putative fatty acid elongase 3 (elo-3) from Caenorhabditis elegans.